We begin with the raw amino-acid sequence, 326 residues long: Isopenicillin N synthase (326 aa).

Positions 84, 88, and 186 each coordinate isopenicillin N. R84, Y88, Y186, H209, and D211 together coordinate N-[(5S)-5-amino-5-carboxypentanoyl]-L-cysteinyl-D-valine. One can recognise a Fe2OG dioxygenase domain in the interval L183–L283. Fe(2+) is bound by residues H209, D211, and H265. Residue R274 coordinates 2-oxoglutarate. An isopenicillin N-binding site is contributed by S276. S276 serves as a coordination point for N-[(5S)-5-amino-5-carboxypentanoyl]-L-cysteinyl-D-valine.

The protein belongs to the iron/ascorbate-dependent oxidoreductase family. Requires Fe cation as cofactor. The cofactor is L-ascorbate.

It carries out the reaction N-[(5S)-5-amino-5-carboxypentanoyl]-L-cysteinyl-D-valine + O2 = isopenicillin N + 2 H2O. It functions in the pathway antibiotic biosynthesis; penicillin G biosynthesis; penicillin G from L-alpha-aminoadipate and L-cysteine and L-valine: step 2/3. Removes, in the presence of oxygen, 4 hydrogen atoms from delta-L-(alpha-aminoadipyl)-L-cysteinyl-D-valine (ACV) to form the azetidinone and thiazolidine rings of isopenicillin. The sequence is that of Isopenicillin N synthase (pcbC) from Lysobacter lactamgenus.